A 602-amino-acid polypeptide reads, in one-letter code: Spermidine-citrate ligase (602 aa).

ATP is bound by residues 286 to 288 (SLR), K300, and R312.

The protein belongs to the IucA/IucC family.

The catalysed reaction is spermidine + citrate + ATP = N(8)-citryl-spermidine + AMP + diphosphate + H(+). It functions in the pathway siderophore biosynthesis; petrobactin biosynthesis. Involved in the biosynthesis of petrobactin, a catecholate siderophore that functions in both iron acquisition and virulence. Catalyzes the ATP-dependent condensation of citric acid and spermidine to form N(8)-citryl-spermidine. It can also catalyze the condensation of several di- and triamine analogs of spermidine with citric acid and the condensation of the citric acid analog tricarballylic acid with spermidine. Required for growth in iron-depleted medium and for full virulence in a mouse model of infection. This is Spermidine-citrate ligase from Bacillus anthracis.